Consider the following 601-residue polypeptide: Aspartate--tRNA(Asp/Asn) ligase (601 aa).

Glu-177 lines the L-aspartate pocket. Residues 201–204 (QLFK) are aspartate. Arg-223 is a binding site for L-aspartate. ATP contacts are provided by residues 223-225 (RDE) and Gln-232. His-455 serves as a coordination point for L-aspartate. Glu-489 lines the ATP pocket. Arg-496 lines the L-aspartate pocket. 541 to 544 (GWDR) is a binding site for ATP. The interval 568 to 601 (VDPLTDAPAPIPLEQRRETGVDFKPKKKTDESAV) is disordered. Basic and acidic residues predominate over residues 581-601 (EQRRETGVDFKPKKKTDESAV).

It belongs to the class-II aminoacyl-tRNA synthetase family. Type 1 subfamily. Homodimer.

It localises to the cytoplasm. It catalyses the reaction tRNA(Asx) + L-aspartate + ATP = L-aspartyl-tRNA(Asx) + AMP + diphosphate. Functionally, aspartyl-tRNA synthetase with relaxed tRNA specificity since it is able to aspartylate not only its cognate tRNA(Asp) but also tRNA(Asn). Reaction proceeds in two steps: L-aspartate is first activated by ATP to form Asp-AMP and then transferred to the acceptor end of tRNA(Asp/Asn). In Corynebacterium diphtheriae (strain ATCC 700971 / NCTC 13129 / Biotype gravis), this protein is Aspartate--tRNA(Asp/Asn) ligase.